Here is a 424-residue protein sequence, read N- to C-terminus: Histidine--tRNA ligase (424 aa).

It belongs to the class-II aminoacyl-tRNA synthetase family. As to quaternary structure, homodimer.

Its subcellular location is the cytoplasm. It carries out the reaction tRNA(His) + L-histidine + ATP = L-histidyl-tRNA(His) + AMP + diphosphate + H(+). The chain is Histidine--tRNA ligase from Marinomonas sp. (strain MWYL1).